The following is a 157-amino-acid chain: Transcriptional repressor NrdR (157 aa).

A zinc finger spans residues 3–34 (CPFCGHAESQVKDSRPSEDGAAIRRRRMCPEC). The region spanning 49 to 139 (LIIVKRSGRR…VYRDFKETSD (91 aa)) is the ATP-cone domain.

This sequence belongs to the NrdR family. Zn(2+) is required as a cofactor.

Negatively regulates transcription of bacterial ribonucleotide reductase nrd genes and operons by binding to NrdR-boxes. In Caulobacter vibrioides (strain ATCC 19089 / CIP 103742 / CB 15) (Caulobacter crescentus), this protein is Transcriptional repressor NrdR.